Consider the following 264-residue polypeptide: 5'-nucleotidase SurE (264 aa).

The a divalent metal cation site is built by Asp-10, Asp-11, Ser-43, and Asn-97.

This sequence belongs to the SurE nucleotidase family. Requires a divalent metal cation as cofactor.

It is found in the cytoplasm. It carries out the reaction a ribonucleoside 5'-phosphate + H2O = a ribonucleoside + phosphate. Its function is as follows. Nucleotidase that shows phosphatase activity on nucleoside 5'-monophosphates. The sequence is that of 5'-nucleotidase SurE from Sulfurimonas denitrificans (strain ATCC 33889 / DSM 1251) (Thiomicrospira denitrificans (strain ATCC 33889 / DSM 1251)).